The following is a 288-amino-acid chain: Phosphatidylserine decarboxylase proenzyme (288 aa).

Active-site charge relay system; for autoendoproteolytic cleavage activity residues include Asp-90, His-147, and Ser-254. The active-site Schiff-base intermediate with substrate; via pyruvic acid; for decarboxylase activity is Ser-254. Ser-254 is subject to Pyruvic acid (Ser); by autocatalysis.

The protein belongs to the phosphatidylserine decarboxylase family. PSD-B subfamily. Prokaryotic type I sub-subfamily. As to quaternary structure, heterodimer of a large membrane-associated beta subunit and a small pyruvoyl-containing alpha subunit. Requires pyruvate as cofactor. In terms of processing, is synthesized initially as an inactive proenzyme. Formation of the active enzyme involves a self-maturation process in which the active site pyruvoyl group is generated from an internal serine residue via an autocatalytic post-translational modification. Two non-identical subunits are generated from the proenzyme in this reaction, and the pyruvate is formed at the N-terminus of the alpha chain, which is derived from the carboxyl end of the proenzyme. The autoendoproteolytic cleavage occurs by a canonical serine protease mechanism, in which the side chain hydroxyl group of the serine supplies its oxygen atom to form the C-terminus of the beta chain, while the remainder of the serine residue undergoes an oxidative deamination to produce ammonia and the pyruvoyl prosthetic group on the alpha chain. During this reaction, the Ser that is part of the protease active site of the proenzyme becomes the pyruvoyl prosthetic group, which constitutes an essential element of the active site of the mature decarboxylase.

The protein localises to the cell membrane. It catalyses the reaction a 1,2-diacyl-sn-glycero-3-phospho-L-serine + H(+) = a 1,2-diacyl-sn-glycero-3-phosphoethanolamine + CO2. It participates in phospholipid metabolism; phosphatidylethanolamine biosynthesis; phosphatidylethanolamine from CDP-diacylglycerol: step 2/2. Catalyzes the formation of phosphatidylethanolamine (PtdEtn) from phosphatidylserine (PtdSer). This Hamiltonella defensa subsp. Acyrthosiphon pisum (strain 5AT) protein is Phosphatidylserine decarboxylase proenzyme.